The following is a 361-amino-acid chain: Chorismate synthase (361 aa).

Positions 48 and 54 each coordinate NADP(+). FMN contacts are provided by residues 125-127 (RSS), 238-239 (NA), Gly278, 293-297 (KPTSS), and Arg319.

The protein belongs to the chorismate synthase family. Homotetramer. Requires FMNH2 as cofactor.

The enzyme catalyses 5-O-(1-carboxyvinyl)-3-phosphoshikimate = chorismate + phosphate. Its pathway is metabolic intermediate biosynthesis; chorismate biosynthesis; chorismate from D-erythrose 4-phosphate and phosphoenolpyruvate: step 7/7. In terms of biological role, catalyzes the anti-1,4-elimination of the C-3 phosphate and the C-6 proR hydrogen from 5-enolpyruvylshikimate-3-phosphate (EPSP) to yield chorismate, which is the branch point compound that serves as the starting substrate for the three terminal pathways of aromatic amino acid biosynthesis. This reaction introduces a second double bond into the aromatic ring system. This chain is Chorismate synthase, found in Escherichia coli (strain SE11).